Here is a 365-residue protein sequence, read N- to C-terminus: Protein RecA (365 aa).

Residue G81–T88 participates in ATP binding.

Belongs to the RecA family.

Its subcellular location is the cytoplasm. Can catalyze the hydrolysis of ATP in the presence of single-stranded DNA, the ATP-dependent uptake of single-stranded DNA by duplex DNA, and the ATP-dependent hybridization of homologous single-stranded DNAs. It interacts with LexA causing its activation and leading to its autocatalytic cleavage. The chain is Protein RecA from Borreliella afzelii (strain PKo) (Borrelia afzelii).